We begin with the raw amino-acid sequence, 485 residues long: ATP synthase subunit beta (485 aa).

The segment covering 1 to 11 (MPATETADKNT) has biased composition (basic and acidic residues). Residues 1 to 20 (MPATETADKNTKSANSDTSG) form a disordered region. An ATP-binding site is contributed by 170–177 (GGAGVGKT).

The protein belongs to the ATPase alpha/beta chains family. In terms of assembly, F-type ATPases have 2 components, CF(1) - the catalytic core - and CF(0) - the membrane proton channel. CF(1) has five subunits: alpha(3), beta(3), gamma(1), delta(1), epsilon(1). CF(0) has three main subunits: a(1), b(2) and c(9-12). The alpha and beta chains form an alternating ring which encloses part of the gamma chain. CF(1) is attached to CF(0) by a central stalk formed by the gamma and epsilon chains, while a peripheral stalk is formed by the delta and b chains.

The protein resides in the cell membrane. The enzyme catalyses ATP + H2O + 4 H(+)(in) = ADP + phosphate + 5 H(+)(out). Its function is as follows. Produces ATP from ADP in the presence of a proton gradient across the membrane. The catalytic sites are hosted primarily by the beta subunits. The polypeptide is ATP synthase subunit beta (Mycobacterium avium (strain 104)).